The chain runs to 208 residues: EF-hand protein 5 variant 1 (208 aa).

Residues 1–34 (MQARGTVKVQGDAKVDGKMSTGQHSHHQHLNSTQ) form a disordered region. EF-hand domains follow at residues 64–98 (MAEG…HLTE), 99–134 (EEFH…EVDD), 135–170 (TMAD…LGER), and 171–206 (STPE…SRVN). Positions 118, 123, 148, 152, and 154 each coordinate Ca(2+).

The chain is EF-hand protein 5 variant 1 from Trypanosoma cruzi.